The chain runs to 311 residues: 4-hydroxy-tetrahydrodipicolinate synthase (311 aa).

Threonine 49 contributes to the pyruvate binding site. The Proton donor/acceptor role is filled by tyrosine 138. The active-site Schiff-base intermediate with substrate is the lysine 166. Valine 207 contacts pyruvate.

Belongs to the DapA family. In terms of assembly, homotetramer; dimer of dimers.

Its subcellular location is the cytoplasm. It carries out the reaction L-aspartate 4-semialdehyde + pyruvate = (2S,4S)-4-hydroxy-2,3,4,5-tetrahydrodipicolinate + H2O + H(+). It functions in the pathway amino-acid biosynthesis; L-lysine biosynthesis via DAP pathway; (S)-tetrahydrodipicolinate from L-aspartate: step 3/4. Catalyzes the condensation of (S)-aspartate-beta-semialdehyde [(S)-ASA] and pyruvate to 4-hydroxy-tetrahydrodipicolinate (HTPA). This Lactobacillus helveticus (strain DPC 4571) protein is 4-hydroxy-tetrahydrodipicolinate synthase.